The following is a 268-amino-acid chain: 4-hydroxy-tetrahydrodipicolinate reductase (268 aa).

NAD(+) contacts are provided by residues 10 to 15 (GAGGRM), Asp36, 99 to 101 (GTT), and 123 to 126 (APNM). His156 acts as the Proton donor/acceptor in catalysis. His157 is a (S)-2,3,4,5-tetrahydrodipicolinate binding site. The Proton donor role is filled by Lys160. Position 166–167 (166–167 (GT)) interacts with (S)-2,3,4,5-tetrahydrodipicolinate.

Belongs to the DapB family.

It localises to the cytoplasm. It carries out the reaction (S)-2,3,4,5-tetrahydrodipicolinate + NAD(+) + H2O = (2S,4S)-4-hydroxy-2,3,4,5-tetrahydrodipicolinate + NADH + H(+). The enzyme catalyses (S)-2,3,4,5-tetrahydrodipicolinate + NADP(+) + H2O = (2S,4S)-4-hydroxy-2,3,4,5-tetrahydrodipicolinate + NADPH + H(+). It functions in the pathway amino-acid biosynthesis; L-lysine biosynthesis via DAP pathway; (S)-tetrahydrodipicolinate from L-aspartate: step 4/4. Functionally, catalyzes the conversion of 4-hydroxy-tetrahydrodipicolinate (HTPA) to tetrahydrodipicolinate. This Dechloromonas aromatica (strain RCB) protein is 4-hydroxy-tetrahydrodipicolinate reductase.